A 206-amino-acid chain; its full sequence is RILP-like protein 2 (206 aa).

Residues Met1–Leu29 form a disordered region. Residues Glu8 to Gly19 show a composition bias toward acidic residues. Positions Gly19 to Glu108 constitute an RH1 domain. The stretch at Leu67–Ser159 forms a coiled coil. Residues Arg125–Leu197 form the RH2 domain. The disordered stretch occupies residues Leu161 to Glu189. The span at Pro168–Leu177 shows a compositional bias: basic and acidic residues.

The protein belongs to the RILPL family. Homodimer. Interacts with RAC1. Interacts (via N-terminus) with MYO5A, the interaction is required for its role in dendrite formation. Interacts with RAB8A; interaction is dependent on the phosphorylation of RAB8A on 'Thr-72'. Interacts with RAB10 and RAB12; interaction is dependent on the phosphorylation of 'Thr-73' on RAB10 and 'Ser-105' on RAB12.

It is found in the cytoplasm. The protein resides in the cytosol. It localises to the cytoskeleton. The protein localises to the microtubule organizing center. Its subcellular location is the centrosome. It is found in the cell projection. The protein resides in the cilium. In terms of biological role, involved in cell shape and neuronal morphogenesis, positively regulating the establishment and maintenance of dendritic spines. Plays a role in cellular protein transport, including protein transport away from primary cilia. May function via activation of RAC1 and PAK1. This is RILP-like protein 2 (RILPL2) from Bos taurus (Bovine).